The chain runs to 207 residues: Large ribosomal subunit protein uL4 (207 aa).

The segment at Ala-50 to Gly-76 is disordered.

Belongs to the universal ribosomal protein uL4 family. Part of the 50S ribosomal subunit.

In terms of biological role, one of the primary rRNA binding proteins, this protein initially binds near the 5'-end of the 23S rRNA. It is important during the early stages of 50S assembly. It makes multiple contacts with different domains of the 23S rRNA in the assembled 50S subunit and ribosome. Forms part of the polypeptide exit tunnel. This chain is Large ribosomal subunit protein uL4, found in Staphylococcus aureus (strain JH9).